The following is a 330-amino-acid chain: (11Z)-hexadec-11-enoyl-CoA conjugase (330 aa).

The next 2 helical transmembrane spans lie at 37–57 (IVVM…YGLY) and 65–85 (LATS…ITAG). The Histidine box-1 signature appears at 87–92 (HRLWSH). The helical transmembrane segment at 101 to 121 (LEILLMVFNSIAFQNTIFTWV) threads the bilayer. Residues 124-128 (HRLHH) carry the Histidine box-2 motif. 2 helical membrane-spanning segments follow: residues 185–205 (AIPF…MYFW) and 216–238 (TVLR…HLWG). The Histidine box-3 motif lies at 264–268 (HNYHH).

This sequence belongs to the fatty acid desaturase type 1 family. Fe(2+) is required as a cofactor. Highly expressed in the pheromone gland.

It localises to the membrane. It carries out the reaction an 11,12-saturated fatty acyl-CoA + 2 Fe(II)-[cytochrome b5] + O2 + 2 H(+) = an (11Z)-Delta(11)-fatty acyl-CoA + 2 Fe(III)-[cytochrome b5] + 2 H2O. The enzyme catalyses (11Z)-hexadecenoyl-CoA + AH2 + O2 = (10E,12Z)-hexadecadienoyl-CoA + A + 2 H2O. In terms of biological role, fatty acid desaturase that catalyzes 2 consecutive steps in the biosynthesis of bombykol, a sex pheromone produced by the moth. First acts as an acyl-CoA Delta(11) desaturase (1) by catalyzing the formation of Delta(11) fatty acyl precursors. Then acts as a (11Z)-hexadec-11-enoyl-CoA conjugase (2) by converting a single cis double bond at position 11 of (11Z)-hexadec-11-enoyl-CoA into conjugated 10 trans and 12 cis double bonds. The protein is (11Z)-hexadec-11-enoyl-CoA conjugase of Bombyx mori (Silk moth).